A 319-amino-acid polypeptide reads, in one-letter code: Cytochrome c biogenesis protein CcsA (319 aa).

7 consecutive transmembrane segments (helical) span residues 9–29 (ILTHISFSLVSIGITIFLITL), 44–64 (GVIGTFLCITGLLVTRWAYSG), 71–91 (LYESLLFLSWSFAIIHMFPYF), 143–163 (MVLGYAALLCGSLLSVALLVI), 225–245 (IISLGFIFLTIGILSGAVWAN), 259–273 (TWAFITWTMFAIYLH), and 286–306 (AIVAFLGFIIIWICYFGVNLL).

The protein belongs to the CcmF/CycK/Ccl1/NrfE/CcsA family. May interact with Ccs1.

It localises to the plastid. Its subcellular location is the chloroplast thylakoid membrane. Functionally, required during biogenesis of c-type cytochromes (cytochrome c6 and cytochrome f) at the step of heme attachment. This Oenothera glazioviana (Large-flowered evening primrose) protein is Cytochrome c biogenesis protein CcsA.